Consider the following 225-residue polypeptide: 7-cyano-7-deazaguanine synthase (225 aa).

9–19 (LSGGLDSATCL) contributes to the ATP binding site. Zn(2+) is bound by residues Cys189, Cys199, Cys202, and Cys205.

This sequence belongs to the QueC family. Zn(2+) serves as cofactor.

The catalysed reaction is 7-carboxy-7-deazaguanine + NH4(+) + ATP = 7-cyano-7-deazaguanine + ADP + phosphate + H2O + H(+). Its pathway is purine metabolism; 7-cyano-7-deazaguanine biosynthesis. Functionally, catalyzes the ATP-dependent conversion of 7-carboxy-7-deazaguanine (CDG) to 7-cyano-7-deazaguanine (preQ(0)). The polypeptide is 7-cyano-7-deazaguanine synthase (Dechloromonas aromatica (strain RCB)).